Reading from the N-terminus, the 235-residue chain is tRNA pseudouridine synthase B (235 aa).

Asp-45 functions as the Nucleophile in the catalytic mechanism.

Belongs to the pseudouridine synthase TruB family. Type 1 subfamily.

The catalysed reaction is uridine(55) in tRNA = pseudouridine(55) in tRNA. Functionally, responsible for synthesis of pseudouridine from uracil-55 in the psi GC loop of transfer RNAs. This is tRNA pseudouridine synthase B from Chlamydia pneumoniae (Chlamydophila pneumoniae).